The primary structure comprises 310 residues: Vomeronasal type-1 receptor 53 (310 aa).

Over 1 to 20 (MNKANLLHTDINLKITLFSE) the chain is Extracellular. The chain crosses the membrane as a helical span at residues 21–41 (VSVGISANSILIFAHLCMLLG). Over 42-50 (ENRPKPIDL) the chain is Cytoplasmic. Residues 51–71 (YIAFFSLTQLMLLITMGLIAV) traverse the membrane as a helical segment. At 72–93 (DMFMPWGRWDSTTCQSLIYLHR) the chain is on the extracellular side. Cysteine 85 and cysteine 172 are disulfide-bonded. A helical transmembrane segment spans residues 94 to 114 (LLRGLTLSATCLLNVLWTITL). The Cytoplasmic portion of the chain corresponds to 115–134 (SPRSSCLTKFKHKSLQHISC). Residues 135 to 155 (AFLFLCVLYMSFNSHLFISII) traverse the membrane as a helical segment. Residues 156–183 (AYPNLTLENFMYVTQSCSLIPLSYFRKS) lie on the Extracellular side of the membrane. Residue asparagine 159 is glycosylated (N-linked (GlcNAc...) asparagine). A helical membrane pass occupies residues 184 to 204 (MFSIPMAIREALLIGLMALSG). Residues 205–238 (GYMVAHLWRHKKQAQHLHRTSLSSKASPEQRATR) lie on the Cytoplasmic side of the membrane. A helical membrane pass occupies residues 239–259 (TIMLLMSFFVVLYILDLVIFH). At 260-268 (SRMKFKDGS) the chain is on the extracellular side. The chain crosses the membrane as a helical span at residues 269–289 (ILYGVQIIVSHSYATVSPFVF). Residues 290-310 (ICTEKRITNFLRSMCGRIVNI) are Cytoplasmic-facing.

The protein belongs to the G-protein coupled receptor 1 family.

It is found in the cell membrane. Its function is as follows. Putative pheromone receptor implicated in the regulation of social and reproductive behavior. In Mus musculus (Mouse), this protein is Vomeronasal type-1 receptor 53 (Vmn1r53).